We begin with the raw amino-acid sequence, 447 residues long: N-succinylarginine dihydrolase (447 aa).

Substrate is bound by residues 21–30, asparagine 112, and 139–140; these read AGLAHGNVAS and HR. Residue glutamate 176 is part of the active site. A substrate-binding site is contributed by arginine 215. The active site involves histidine 251. Residues aspartate 253 and asparagine 364 each coordinate substrate. Residue cysteine 370 is the Nucleophile of the active site.

It belongs to the succinylarginine dihydrolase family. Homodimer.

The catalysed reaction is N(2)-succinyl-L-arginine + 2 H2O + 2 H(+) = N(2)-succinyl-L-ornithine + 2 NH4(+) + CO2. It functions in the pathway amino-acid degradation; L-arginine degradation via AST pathway; L-glutamate and succinate from L-arginine: step 2/5. Functionally, catalyzes the hydrolysis of N(2)-succinylarginine into N(2)-succinylornithine, ammonia and CO(2). The polypeptide is N-succinylarginine dihydrolase (Chromohalobacter salexigens (strain ATCC BAA-138 / DSM 3043 / CIP 106854 / NCIMB 13768 / 1H11)).